A 503-amino-acid polypeptide reads, in one-letter code: Glycerol kinase (503 aa).

Thr-12 contributes to the ADP binding site. The ATP site is built by Thr-12, Thr-13, and Ser-14. Thr-12 provides a ligand contact to sn-glycerol 3-phosphate. Residue Arg-16 participates in ADP binding. Positions 82, 83, 134, and 243 each coordinate sn-glycerol 3-phosphate. Positions 82, 83, 134, 243, and 244 each coordinate glycerol. Residues Thr-265 and Gly-308 each contribute to the ADP site. Positions 265, 308, 312, and 412 each coordinate ATP. Position 412 (Gly-412) interacts with ADP.

The protein belongs to the FGGY kinase family.

It catalyses the reaction glycerol + ATP = sn-glycerol 3-phosphate + ADP + H(+). It participates in polyol metabolism; glycerol degradation via glycerol kinase pathway; sn-glycerol 3-phosphate from glycerol: step 1/1. With respect to regulation, inhibited by fructose 1,6-bisphosphate (FBP). Key enzyme in the regulation of glycerol uptake and metabolism. Catalyzes the phosphorylation of glycerol to yield sn-glycerol 3-phosphate. The sequence is that of Glycerol kinase from Nitrobacter hamburgensis (strain DSM 10229 / NCIMB 13809 / X14).